The sequence spans 330 residues: Phosphate acyltransferase (330 aa).

This sequence belongs to the PlsX family. In terms of assembly, homodimer. Probably interacts with PlsY.

The protein resides in the cytoplasm. It catalyses the reaction a fatty acyl-[ACP] + phosphate = an acyl phosphate + holo-[ACP]. The protein operates within lipid metabolism; phospholipid metabolism. In terms of biological role, catalyzes the reversible formation of acyl-phosphate (acyl-PO(4)) from acyl-[acyl-carrier-protein] (acyl-ACP). This enzyme utilizes acyl-ACP as fatty acyl donor, but not acyl-CoA. The polypeptide is Phosphate acyltransferase (Bacillus licheniformis (strain ATCC 14580 / DSM 13 / JCM 2505 / CCUG 7422 / NBRC 12200 / NCIMB 9375 / NCTC 10341 / NRRL NRS-1264 / Gibson 46)).